Reading from the N-terminus, the 92-residue chain is Large ribosomal subunit protein bL31 (92 aa).

The protein belongs to the bacterial ribosomal protein bL31 family. Type A subfamily. In terms of assembly, part of the 50S ribosomal subunit.

Functionally, binds the 23S rRNA. The chain is Large ribosomal subunit protein bL31 from Mesoplasma florum (strain ATCC 33453 / NBRC 100688 / NCTC 11704 / L1) (Acholeplasma florum).